The chain runs to 414 residues: Histidine--tRNA ligase (414 aa).

This sequence belongs to the class-II aminoacyl-tRNA synthetase family. As to quaternary structure, homodimer.

It is found in the cytoplasm. It carries out the reaction tRNA(His) + L-histidine + ATP = L-histidyl-tRNA(His) + AMP + diphosphate + H(+). This chain is Histidine--tRNA ligase, found in Synechococcus sp. (strain RCC307).